A 1173-amino-acid chain; its full sequence is Thrombospondin-1 (1173 aa).

Positions 1–18 (MKGIFLLLMLVMPQTHQA) are cleaved as a signal peptide. One can recognise a Laminin G-like domain in the interval 22-224 (GNDDNSVFDL…LQNVRFVFGT (203 aa)). The tract at residues 50–98 (HLVKGPDPSSPAYRIEDADLIPPLPEDKFQDLLDAIRADRGFILLATLR) is heparin-binding. Residues Asn-155 and Asn-158 are each glycosylated (N-linked (GlcNAc...) asparagine). The cysteines at positions 174 and 235 are disulfide-linked. N-linked (GlcNAc...) asparagine glycans are attached at residues Asn-250 and Asn-363. Residues 319 to 376 (GVCLHNGVLHKNRDEWTVDSCTECTCQNSATICRKVSCPLMPCTNATIPDGECCPRCW) enclose the VWFC domain. 3 consecutive TSP type-1 domains span residues 382-432 (DDDW…QDCD), 438-493 (DGGW…DPCP), and 495-550 (NGQW…QDCP). Disulfide bonds link Cys-394–Cys-426, Cys-398–Cys-431, Cys-409–Cys-416, Cys-450–Cys-487, Cys-454–Cys-492, Cys-465–Cys-477, Cys-507–Cys-544, Cys-511–Cys-549, Cys-522–Cys-534, Cys-554–Cys-565, Cys-559–Cys-575, Cys-578–Cys-589, Cys-595–Cys-611, Cys-602–Cys-620, Cys-623–Cys-647, Cys-653–Cys-666, Cys-660–Cys-679, and Cys-681–Cys-692. One can recognise an EGF-like 1 domain in the interval 550–590 (PIDGCLSNPCFAGVKCTSFIDGSWKCGSCPPGYRGNGITCK). The EGF-like 2 domain occupies 649-693 (PRNPCADGTHDCHKNARCIYLGHYSDPMFRCECRPGYAGNGIICG). 8 TSP type-3 repeats span residues 694-729 (EDTD…NSGQ), 730-765 (EDYD…NPAQ), 766-788 (YDYD…NPDQ), 789-824 (ADTD…NVDQ), 825-847 (KDTD…NPEQ), 848-885 (TDSD…NANQ), 886-921 (ADHD…NPDQ), and 922-957 (TDTN…EIST). Residues Asn-705 and Asn-711 are each glycosylated (N-linked (GlcNAc...) asparagine). Intrachain disulfides connect Cys-708–Cys-716, Cys-721–Cys-741, Cys-757–Cys-777, Cys-780–Cys-800, Cys-816–Cys-836, Cys-839–Cys-859, Cys-877–Cys-897, Cys-913–Cys-933, and Cys-949–Cys-1170. A disordered region spans residues 838 to 935 (NCPLEHNPEQ…GDGRGDACQY (98 aa)). Positions 886–897 (ADHDKDGKGDAC) are enriched in basic and acidic residues. The Cell attachment site signature appears at 929 to 931 (RGD). One can recognise a TSP C-terminal domain in the interval 961 to 1173 (RKFQMVPLDP…SDLKYECRDS (213 aa)). A glycan (N-linked (GlcNAc...) asparagine) is linked at Asn-1070.

It belongs to the thrombospondin family. In terms of assembly, homotrimer; disulfide-linked.

The protein resides in the secreted. It is found in the cell surface. Its subcellular location is the extracellular space. It localises to the extracellular matrix. The protein localises to the endoplasmic reticulum. The protein resides in the sarcoplasmic reticulum. Its function is as follows. Adhesive glycoprotein that mediates cell-to-cell and cell-to-matrix interactions. Can bind to fibrinogen, fibronectin, laminin, type V collagen and integrins alpha-V/beta-1, alpha-V/beta-3 and alpha-IIb/beta-3. May play a role in ER stress response. This is Thrombospondin-1 (thbs1) from Xenopus laevis (African clawed frog).